We begin with the raw amino-acid sequence, 443 residues long: MSQTNQVPKIGFVSLGCPKNLVDSERILTELRTEGYQVVPTYDDADLVIVNTCGFIDSAVQESLEAIGEALDENGKVIVTGCLGAKENQIREVHPKVLEITGPHSYEQVLSHIHHYVPKPSHNPFTSLVPEQGVKLTPRHYAYLKISEGCNHRCTFCIIPSMRGDLDSRPIGEVLNEAKRLVNAGVKELLVISQDTSAYGVDTKHQTGFWDGMPVKTSMVSLCEQLAKLGIWVRLHYVYPYPHVDEVIPLMAEGKILPYLDIPLQHASPKVLKLMKRPGSVERTLERVKRWREICPELTLRSTFIVGFPGETEEDFQMLLDFLTEARLDRVGCFKYSPVEGAKANELPDQVPEEVKEERYHRFMQLQQQISTERLQEKIGKVLPVIIDEVDEEGAIGRSMADAPEIDGAVYLNEQFDVEPGQIVRVLIEHADEYDLWGTIVEQ.

An MTTase N-terminal domain is found at 8–118 (PKIGFVSLGC…VLSHIHHYVP (111 aa)). Cys-17, Cys-53, Cys-82, Cys-150, Cys-154, and Cys-157 together coordinate [4Fe-4S] cluster. The Radical SAM core domain occupies 136-373 (LTPRHYAYLK…MQLQQQISTE (238 aa)). In terms of domain architecture, TRAM spans 376 to 442 (QEKIGKVLPV…EYDLWGTIVE (67 aa)).

The protein belongs to the methylthiotransferase family. RimO subfamily. The cofactor is [4Fe-4S] cluster.

The protein resides in the cytoplasm. The catalysed reaction is L-aspartate(89)-[ribosomal protein uS12]-hydrogen + (sulfur carrier)-SH + AH2 + 2 S-adenosyl-L-methionine = 3-methylsulfanyl-L-aspartate(89)-[ribosomal protein uS12]-hydrogen + (sulfur carrier)-H + 5'-deoxyadenosine + L-methionine + A + S-adenosyl-L-homocysteine + 2 H(+). Functionally, catalyzes the methylthiolation of an aspartic acid residue of ribosomal protein uS12. The protein is Ribosomal protein uS12 methylthiotransferase RimO of Proteus mirabilis (strain HI4320).